Consider the following 356-residue polypeptide: Guanine nucleotide-binding protein alpha-2 subunit (356 aa).

Residues 1-25 (MGLCQSEEEKVGSQKSRAIDKEIKQ) are disordered. G2 carries N-myristoyl glycine lipidation. Residue C4 is the site of S-palmitoyl cysteine attachment. Over residues 7–25 (EEEKVGSQKSRAIDKEIKQ) the composition is skewed to basic and acidic residues. One can recognise a G-alpha domain in the interval 14 to 338 (QKSRAIDKEI…TDTNQVQKIL (325 aa)). The tract at residues 17–30 (RAIDKEIKQNQSND) is G1 motif. GTP is bound by residues Q25, Q27, S28, N29, D30, V135, E160, A166, V188, E254, S255, C257, and F310. N29 is a Mg(2+) binding site. The interval 158-166 (FFENLDRIA) is G2 motif. A166 serves as a coordination point for Mg(2+). Positions 181–190 (RTKTTGIVEV) are G3 motif. The segment at 250-257 (MRLFESIC) is G4 motif. The interval 308–313 (QKFEAL) is G5 motif.

This sequence belongs to the G-alpha family. G(q) subfamily. G proteins are composed of 3 units; alpha, beta and gamma. The alpha chain contains the guanine nucleotide binding site. Requires Mg(2+) as cofactor.

Guanine nucleotide-binding proteins (G proteins) are involved as modulators or transducers in various transmembrane signaling systems. Involved in behavioral responses to P.aeruginosa by controlling the expression of daf-7, a member of the TGF-beta family, in ASJ sensory neurons. This Caenorhabditis briggsae protein is Guanine nucleotide-binding protein alpha-2 subunit (gpa-2).